The following is a 363-amino-acid chain: MKLYQTLRGIVLVSTGCIFLGMHGGYAAEVPVTSSGYENLLESKEQDPSGLAIHDRILFKVDEENVVTALDVIHKLNLLFYNSYPHLIDSFPARSQYYTAMWPVVLESVIDEFLMVADAKAKRIATDPTAVNQEIEEMFGRDLSPLYAHFEMSPNDIFNVIDRTLTAQRVMGMMVRSKVMLKVTPGKIREYYRKLEEEASRKVIWKYRVLTIKANTESLASQIADKVRARLNEAKTWDKDRLTALVISQGGQLVCSEEFSRENSELSQSHKQELDLIGYPKELCGLPKAHKSGYKLYMLLDKTSGSIEPLDVMESKIKQHLFALEAESVEKQYKDRLRKRYGYDASMIAKLLSEEAPPLFSLL.

The N-terminal stretch at 1 to 27 is a signal peptide; that stretch reads MKLYQTLRGIVLVSTGCIFLGMHGGYA.

It belongs to the chlamydial CPn_1058/CT_355/TC_0634 family.

This chain is Protein CPn_1058/CP_0792/CPj1058/CpB1100, found in Chlamydia pneumoniae (Chlamydophila pneumoniae).